The primary structure comprises 305 residues: RNA-binding protein with serine-rich domain 1 (305 aa).

Positions 1-10 (MDLSGVKKKS) are enriched in basic residues. The tract at residues 1-161 (MDLSGVKKKS…KRRSPSPKPT (161 aa)) is necessary for interaction with SRP54, nuclear localization and exon-skipping. Residues 1–170 (MDLSGVKKKS…TKVHIGRLTR (170 aa)) are disordered. The interval 1–220 (MDLSGVKKKS…ENPDEAEKAL (220 aa)) is necessary for interaction with the cleaved p110 isoform of CDC2L1. Residues Lys7 and Lys15 each participate in a glycyl lysine isopeptide (Lys-Gly) (interchain with G-Cter in SUMO2) cross-link. Positions 33 to 59 (DRSDEKSKDRSKDKGATKESSEKDRGR) are enriched in basic and acidic residues. The residue at position 53 (Ser53) is a Phosphoserine; by CK2. The segment covering 68 to 126 (ASSGSSSTRSRSSSTSSSGSSTSTGSSSGSSSSSASSRSGSSSTSRSSSSSSSSGSPSP) has biased composition (low complexity). The interval 69-121 (SSGSSSTRSRSSSTSSSGSSTSTGSSSGSSSSSASSRSGSSSTSRSSSSSSSS) is necessary for interactions with UPF2 and UPF3B and UPF2-dependent NMD. Composition is skewed to basic residues over residues 127–143 (SRRR…KSKP) and 151–167 (RKRR…HIGR). Residues Ser155 and Ser157 each carry the phosphoserine modification. The interval 156–242 (PSPKPTKVHI…ITATAVLAPW (87 aa)) is necessary for interaction with PNN and exon-skipping. The segment at 159-244 (KPTKVHIGRL…ATAVLAPWPR (86 aa)) is interaction with SAP18 and ACIN1. The residue at position 161 (Thr161) is a Phosphothreonine. The 80-residue stretch at 161–240 (TKVHIGRLTR…QEITATAVLA (80 aa)) folds into the RRM domain. Lys218 is subject to N6-acetyllysine. The necessary for interaction with TRA2B, nuclear localization and exon-skipping stretch occupies residues 238 to 305 (VLAPWPRPPP…RSRSSSNSSR (68 aa)). Residues 240 to 305 (APWPRPPPRR…RSRSSSNSSR (66 aa)) form a disordered region. Positions 242–262 (WPRPPPRRFSPPRRMLPPPPM) are enriched in pro residues. The span at 266-298 (SPPRMRRRSRSPRRRSPVRRRSRSPGRRRHRSR) shows a compositional bias: basic residues.

Belongs to the splicing factor SR family. In terms of assembly, found in mRNA splicing-dependent exon junction complexes (EJC). Found in a post-splicing complex with NXF1, RBM8A, UPF1, UPF2, UPF3A, UPF3B and RNPS1. Component of the heterotrimeric ASAP (apoptosis- and splicing-associated protein) and PSAP complexes consisting of RNPS1, SAP18 and either ACIN1 or PNN, respectively; the ASAP and PSAP complexes probably are formed mutually exclusive. Component of the active spliceosome. Associates with polysomes. Interacts with the cleaved p110 isoform of CDC2L1, CSNK2A1, PNN, SART3, SRP54, SRRM1 and TRA2B/SFRS10. In terms of processing, phosphorylated on one or more of the four Ser/Thr residues (Ser-43, Thr-49, Ser-52 or Ser-53). Ser-53 phosphorylation site is important for splicing and translation stimulation activity in vitro. Ubiquitous.

Its subcellular location is the nucleus. The protein resides in the nucleus speckle. The protein localises to the cytoplasm. In terms of biological role, part of pre- and post-splicing multiprotein mRNP complexes. Auxiliary component of the splicing-dependent multiprotein exon junction complex (EJC) deposited at splice junction on mRNAs. The EJC is a dynamic structure consisting of core proteins and several peripheral nuclear and cytoplasmic associated factors that join the complex only transiently either during EJC assembly or during subsequent mRNA metabolism. Component of the ASAP and PSAP complexes which bind RNA in a sequence-independent manner and are proposed to be recruited to the EJC prior to or during the splicing process and to regulate specific excision of introns in specific transcription subsets. The ASAP complex can inhibit RNA processing during in vitro splicing reactions. The ASAP complex promotes apoptosis and is disassembled after induction of apoptosis. Enhances the formation of the ATP-dependent A complex of the spliceosome. Involved in both constitutive splicing and, in association with SRP54 and TRA2B/SFRS10, in distinctive modulation of alternative splicing in a substrate-dependent manner. Involved in the splicing modulation of BCL2L1/Bcl-X (and probably other apoptotic genes); specifically inhibits formation of proapoptotic isoforms such as Bcl-X(S); the activity is different from the established EJC assembly and function. Participates in mRNA 3'-end cleavage. Involved in UPF2-dependent nonsense-mediated decay (NMD) of mRNAs containing premature stop codons. Also mediates increase of mRNA abundance and translational efficiency. Binds spliced mRNA 20-25 nt upstream of exon-exon junctions. In Homo sapiens (Human), this protein is RNA-binding protein with serine-rich domain 1 (RNPS1).